Reading from the N-terminus, the 130-residue chain is ATP synthase epsilon chain, chloroplastic (130 aa).

The protein belongs to the ATPase epsilon chain family. In terms of assembly, F-type ATPases have 2 components, CF(1) - the catalytic core - and CF(0) - the membrane proton channel. CF(1) has five subunits: alpha(3), beta(3), gamma(1), delta(1), epsilon(1). CF(0) has three main subunits: a, b and c.

It localises to the plastid. The protein resides in the chloroplast thylakoid membrane. Functionally, produces ATP from ADP in the presence of a proton gradient across the membrane. The polypeptide is ATP synthase epsilon chain, chloroplastic (Emiliania huxleyi (Coccolithophore)).